The following is an 849-amino-acid chain: Formin-like protein 4 (849 aa).

Residues 1 to 22 form the signal peptide; that stretch reads MPPTLALLLFLALSAVAAVGGA. Residues 36-104 form a disordered region; the sequence is IEWTPPPSTA…RARGGGGGGT (69 aa). Residues 38–52 show a composition bias toward pro residues; sequence WTPPPSTASPSPPSP. A compositionally biased stretch (low complexity) spans 53-64; sequence DFSSDPSTPATP. Residues 109-129 traverse the membrane as a helical segment; sequence IVVASAAAAAVLALLAFAAAF. Over residues 185–194 the composition is skewed to basic and acidic residues; the sequence is ARRGMCRDVD. The disordered stretch occupies residues 185–364; it reads ARRGMCRDVD…PEPPTGPVSA (180 aa). Gly residues predominate over residues 234–246; that stretch reads GSGGGGGGEGGGT. Residues 247-279 show a composition bias toward low complexity; that stretch reads WSEASASSPRTTTASRRSLPSLTSDFFPTTPAA. Composition is skewed to pro residues over residues 280 to 297, 324 to 339, and 346 to 360; these read APVP…PPAP, PSNP…PPPS, and PKPP…PPTG. The FH2 domain maps to 406–823; sequence EAAGDEPRPK…SARSFRISAA (418 aa).

The protein belongs to the formin-like family. Class-I subfamily.

It localises to the membrane. The polypeptide is Formin-like protein 4 (FH4) (Oryza sativa subsp. japonica (Rice)).